We begin with the raw amino-acid sequence, 225 residues long: Transcription factor HES-7 (225 aa).

Residues 12–69 form the bHLH domain; that stretch reads GPKMLKPLVEKRRRDRINRSLEELRLLLLERTRDQNLRNPKLEKAEILEFAVGYLRER. The Orange domain occupies 92–122; it reads YLSGFRECLLRLAAFAHDASPAARSQLFSAL. Positions 124 to 225 are disordered; it reads GYRRPKPPRP…PPPAFWRPWP (102 aa). 2 stretches are compositionally biased toward pro residues: residues 140-149 and 213-225; these read LPAPRPPLDP and PSLP…RPWP. A WRPW motif motif is present at residues 221-224; sequence WRPW.

In terms of assembly, transcription repression requires formation of a complex with a corepressor protein of the Groucho/TLE family.

It is found in the nucleus. Transcriptional repressor. Represses transcription from both N box- and E box-containing promoters. May with HES1, cooperatively regulate somite formation in the presomitic mesoderm (PSM). May function as a segmentation clock, which is essential for coordinated somite segmentation. The protein is Transcription factor HES-7 (Hes7) of Mus musculus (Mouse).